The primary structure comprises 202 residues: dTTP/UTP pyrophosphatase (202 aa).

Catalysis depends on D83, which acts as the Proton acceptor.

The protein belongs to the Maf family. YhdE subfamily. A divalent metal cation is required as a cofactor.

It is found in the cytoplasm. The enzyme catalyses dTTP + H2O = dTMP + diphosphate + H(+). It carries out the reaction UTP + H2O = UMP + diphosphate + H(+). Its function is as follows. Nucleoside triphosphate pyrophosphatase that hydrolyzes dTTP and UTP. May have a dual role in cell division arrest and in preventing the incorporation of modified nucleotides into cellular nucleic acids. This Polaromonas sp. (strain JS666 / ATCC BAA-500) protein is dTTP/UTP pyrophosphatase.